The chain runs to 369 residues: MAPCMLLLLLAAALAPTQTRAGPHSLRYFHTAVSRPGLGKPRFISVGYVDDTQFVRFDSDAENPRYEPRVRWMEQVEPEYWERNTQIAKGNEQIFRVNLRTALRYYNQSAGGSHTFQRMYGCEVGSDWRLLRGYEQYAYDGCDYIALNEDLKTWTAADMAALITKHKWEQAGDAERDRAYLEGTCVEWLRRYLQLGNATLPRTDSPKAHVTRHSRPEDKVTLRCWALGFYPADITLTWQLNGEELTQDMELVETRPAGDGTFQKWASVVVPLGKEQYYTCHVYHQGLPEPLTLRWEPPPSTVSNTVIIAVLVVLGAAIVTGAVVAFVMKMRRRNTGGKGGDYALAPGSQTSDLSLPDCKVMVHDPHSLA.

A signal peptide spans 1-21; it reads MAPCMLLLLLAAALAPTQTRA. The segment at 22–111 is alpha-1; it reads GPHSLRYFHT…ALRYYNQSAG (90 aa). The Extracellular segment spans residues 22-305; that stretch reads GPHSLRYFHT…EPPPSTVSNT (284 aa). N-linked (GlcNAc...) asparagine glycosylation is present at Asn107. The tract at residues 112 to 203 is alpha-2; it reads GSHTFQRMYG…QLGNATLPRT (92 aa). Cys122 and Cys185 form a disulfide bridge. A glycan (N-linked (GlcNAc...) asparagine) is linked at Asn197. Residues 204–295 form an alpha-3 region; that stretch reads DSPKAHVTRH…GLPEPLTLRW (92 aa). In terms of domain architecture, Ig-like C1-type spans 206 to 294; that stretch reads PKAHVTRHSR…QGLPEPLTLR (89 aa). Cys224 and Cys280 are oxidised to a cystine. The segment at 296 to 305 is connecting peptide; it reads EPPPSTVSNT. The chain crosses the membrane as a helical span at residues 306 to 328; it reads VIIAVLVVLGAAIVTGAVVAFVM. Residues 329 to 369 lie on the Cytoplasmic side of the membrane; that stretch reads KMRRRNTGGKGGDYALAPGSQTSDLSLPDCKVMVHDPHSLA. 2 positions are modified to phosphoserine: Ser351 and Ser354.

The protein belongs to the MHC class I family. As to quaternary structure, heterodimer of an alpha chain and a beta chain (beta-2-microglobulin).

It is found in the membrane. Involved in the presentation of foreign antigens to the immune system. This Mus musculus (Mouse) protein is H-2 class I histocompatibility antigen, K-K alpha chain (H2-K1).